A 404-amino-acid chain; its full sequence is MKKLLKSVLAFAVLGSASSLHALPVGNPAEPSLMIDGILWEGFGGDPCDPCTTWCDAISLRLGYYGDFVFDRVLKTDVNKQFEMGPVPTTTDTDAAADITTSTPRENPAYGKHMQDAEMFTNAAYMALNIWDRFDVFCTLGATSGYLKGNSASFNLVGLFGDGVANAANAIATVAADSLPNVSLSQAVVELYTDTAFAWSVGARAALWECGCATLGASFQYAQSKPKVEELNVLCNAAQFTINKPKGYVGKEFPLALTAGTDSATDTKDASIDYHEWQASLALSYRLNMFTPYIGVKWSRASFDADTIRIAQPKLAEAILDVTTWNPTIAGAGTIADGTGAAATANGLADTLQIVSLQLNKMKSRKSCGLAIGTTIVDADKYAVTVETRLIDERAAHVNAQFRF.

Positions 1–22 are cleaved as a signal peptide; sequence MKKLLKSVLAFAVLGSASSLHA. The segment at 85-110 is disordered; it reads GPVPTTTDTDAAADITTSTPRENPAY. Residues 89–103 show a composition bias toward low complexity; that stretch reads TTTDTDAAADITTST.

Belongs to the chlamydial porin (CP) (TC 1.B.2) family. As to quaternary structure, part of a disulfide cross-linked outer membrane complex (COMC) composed of the major outer membrane porin (MOMP), the small cysteine-rich protein (OmcA) and the large cysteine-rich periplasmic protein (OmcB).

The protein localises to the cell outer membrane. In elementary bodies (EBs, the infectious stage, which is able to survive outside the host cell) provides the structural integrity of the outer envelope through disulfide cross-links with the small cysteine-rich protein and the large cysteine-rich periplasmic protein. It has been described in publications as the Sarkosyl-insoluble COMC (Chlamydia outer membrane complex), and serves as the functional equivalent of peptidoglycan. Its function is as follows. Permits diffusion of specific solutes through the outer membrane. The sequence is that of Major outer membrane porin (ompA) from Chlamydia muridarum.